The following is a 275-amino-acid chain: 2-dehydro-3-deoxyphosphooctonate aldolase (275 aa).

The protein belongs to the KdsA family.

Its subcellular location is the cytoplasm. The catalysed reaction is D-arabinose 5-phosphate + phosphoenolpyruvate + H2O = 3-deoxy-alpha-D-manno-2-octulosonate-8-phosphate + phosphate. It functions in the pathway carbohydrate biosynthesis; 3-deoxy-D-manno-octulosonate biosynthesis; 3-deoxy-D-manno-octulosonate from D-ribulose 5-phosphate: step 2/3. Its pathway is bacterial outer membrane biogenesis; lipopolysaccharide biosynthesis. This chain is 2-dehydro-3-deoxyphosphooctonate aldolase, found in Francisella tularensis subsp. holarctica (strain LVS).